Here is a 140-residue protein sequence, read N- to C-terminus: L-fucose mutarotase (140 aa).

His22 functions as the Proton donor in the catalytic mechanism. Residues Asp30, Arg107, and 129–131 contribute to the substrate site; that span reads YGN.

It belongs to the RbsD / FucU family. FucU mutarotase subfamily. In terms of assembly, homodecamer.

The protein localises to the cytoplasm. The catalysed reaction is alpha-L-fucose = beta-L-fucose. The protein operates within carbohydrate metabolism; L-fucose metabolism. Its function is as follows. Involved in the anomeric conversion of L-fucose. This Shigella boydii serotype 18 (strain CDC 3083-94 / BS512) protein is L-fucose mutarotase.